Reading from the N-terminus, the 739-residue chain is Sulfate transporter (739 aa).

Basic and acidic residues-rich tracts occupy residues 1-17 (MSSE…RDLP) and 31-46 (TQRR…ETGH). The interval 1–47 (MSSENKEQHDLSPRDLPEEAFGFPSELPLETQRRSGTDLRQSETGHG) is disordered. A Phosphoserine modification is found at Ser12. 2 helical membrane-spanning segments follow: residues 112 to 132 (VMSG…YSLL) and 137 to 157 (PIYG…FGTS). N-linked (GlcNAc...) asparagine glycosylation is present at Asn205. The next 2 helical transmembrane spans lie at 227–247 (FMAG…VSVY) and 255–275 (GFVT…LLGL). Asn357 is a glycosylation site (N-linked (GlcNAc...) asparagine). 4 consecutive transmembrane segments (helical) span residues 378 to 398 (LIPN…AITV), 420 to 440 (AIGF…SAAL), 455 to 475 (LSAI…APLF), and 524 to 544 (LLST…CVIL). One can recognise an STAS domain in the interval 568-719 (TYKNLRSKSG…YSLSEAVAFA (152 aa)).

Belongs to the SLC26A/SulP transporter (TC 2.A.53) family. Post-translationally, N-glycosylated. As to expression, distributed mainly in the thymus, testis and osteoblastic cells. Highly expressed in the bone, cartilage, kidney and colon.

It localises to the cell membrane. Its subcellular location is the apical cell membrane. The enzyme catalyses oxalate(in) + sulfate(out) = oxalate(out) + sulfate(in). It catalyses the reaction sulfate(out) + 2 chloride(in) = sulfate(in) + 2 chloride(out). It carries out the reaction oxalate(out) + 2 chloride(in) = oxalate(in) + 2 chloride(out). The catalysed reaction is bromide(in) + chloride(out) = bromide(out) + chloride(in). The enzyme catalyses nitrate(in) + chloride(out) = nitrate(out) + chloride(in). It catalyses the reaction iodide(in) + chloride(out) = iodide(out) + chloride(in). Functionally, sulfate transporter which mediates sulfate uptake into chondrocytes in order to maintain adequate sulfation of proteoglycans which is needed for cartilage development. Mediates electroneutral anion exchange of sulfate ions for oxalate ions, sulfate and oxalate ions for chloride and/or hydroxyl ions and chloride ions for bromide, iodide and nitrate ions. The coupling of sulfate transport to both hydroxyl and chloride ions likely serves to ensure transport at both acidic pH when most sulfate uptake is mediated by sulfate-hydroxide exchange and alkaline pH when most sulfate uptake is mediated by sulfate-chloride exchange. Essential for chondrocyte proliferation, differentiation and cell size expansion. This is Sulfate transporter (Slc26a2) from Mus musculus (Mouse).